The sequence spans 185 residues: uncharacterized protein (185 aa).

The signal sequence occupies residues M1 to A29. Residues K41–T66 are disordered.

Glycosylated; by Pmt.

It is found in the secreted. This is an uncharacterized protein from Corynebacterium glutamicum (strain ATCC 13032 / DSM 20300 / JCM 1318 / BCRC 11384 / CCUG 27702 / LMG 3730 / NBRC 12168 / NCIMB 10025 / NRRL B-2784 / 534).